The primary structure comprises 221 residues: 7-cyano-7-deazaguanine synthase (221 aa).

Residue 12–22 (FSGGQDSTTCL) participates in ATP binding. Residues Cys-190, Cys-199, Cys-202, and Cys-205 each coordinate Zn(2+).

It belongs to the QueC family. In terms of assembly, homodimer. Requires Zn(2+) as cofactor.

The enzyme catalyses 7-carboxy-7-deazaguanine + NH4(+) + ATP = 7-cyano-7-deazaguanine + ADP + phosphate + H2O + H(+). It functions in the pathway purine metabolism; 7-cyano-7-deazaguanine biosynthesis. Catalyzes the ATP-dependent conversion of 7-carboxy-7-deazaguanine (CDG) to 7-cyano-7-deazaguanine (preQ(0)). This Clostridium novyi (strain NT) protein is 7-cyano-7-deazaguanine synthase.